We begin with the raw amino-acid sequence, 196 residues long: uncharacterized protein (196 aa).

This is an uncharacterized protein from Methanocaldococcus jannaschii (strain ATCC 43067 / DSM 2661 / JAL-1 / JCM 10045 / NBRC 100440) (Methanococcus jannaschii).